The primary structure comprises 325 residues: MAARLEFEKPVIELQTKIAELKKFTQDSEMDLSAEIARLEERLSKLQDEIYKNLKPWDRVQIARLPDRPTTLDYIQYLFTDFFECHGDRTYGDDAAIVGGVAKYHGMPVTVIGHQRGKDTKENLVRNFGMPHPEGYRKALRLMKQADKFNRPIICFIDTKGAYPGKAAEERGQSEAIAKNLFEMAGLTVPVVCIVIGEGGSGGALALGVGNRMLMLENSTYSVISPEGAASILWKDSSLAKKAAESMKITAPDLLELGIIDDMIKEVKGGAHHDIKQQAGYIDGILKETLKSLLQLNAEELISQRYEKYKAIGKVSVEDQYIGVN.

The 255-residue stretch at 38–292 (RLEERLSKLQ…DGILKETLKS (255 aa)) folds into the CoA carboxyltransferase C-terminal domain.

The protein belongs to the AccA family. In terms of assembly, acetyl-CoA carboxylase is a heterohexamer composed of biotin carboxyl carrier protein (AccB), biotin carboxylase (AccC) and two subunits each of ACCase subunit alpha (AccA) and ACCase subunit beta (AccD).

The protein localises to the cytoplasm. It carries out the reaction N(6)-carboxybiotinyl-L-lysyl-[protein] + acetyl-CoA = N(6)-biotinyl-L-lysyl-[protein] + malonyl-CoA. The protein operates within lipid metabolism; malonyl-CoA biosynthesis; malonyl-CoA from acetyl-CoA: step 1/1. In terms of biological role, component of the acetyl coenzyme A carboxylase (ACC) complex. First, biotin carboxylase catalyzes the carboxylation of biotin on its carrier protein (BCCP) and then the CO(2) group is transferred by the carboxyltransferase to acetyl-CoA to form malonyl-CoA. The protein is Acetyl-coenzyme A carboxylase carboxyl transferase subunit alpha of Bacillus velezensis (strain DSM 23117 / BGSC 10A6 / LMG 26770 / FZB42) (Bacillus amyloliquefaciens subsp. plantarum).